Here is a 170-residue protein sequence, read N- to C-terminus: Arginine repressor (170 aa).

Belongs to the ArgR family.

It is found in the cytoplasm. Its pathway is amino-acid biosynthesis; L-arginine biosynthesis [regulation]. In terms of biological role, regulates arginine biosynthesis genes. This is Arginine repressor from Bifidobacterium longum (strain NCC 2705).